Here is a 447-residue protein sequence, read N- to C-terminus: ATP-dependent protease ATPase subunit HslU (447 aa).

Residues Ile-17, 59–64, Asp-256, Glu-321, and Arg-393 each bind ATP; that span reads GVGKTE.

It belongs to the ClpX chaperone family. HslU subfamily. A double ring-shaped homohexamer of HslV is capped on each side by a ring-shaped HslU homohexamer. The assembly of the HslU/HslV complex is dependent on binding of ATP.

The protein resides in the cytoplasm. In terms of biological role, ATPase subunit of a proteasome-like degradation complex; this subunit has chaperone activity. The binding of ATP and its subsequent hydrolysis by HslU are essential for unfolding of protein substrates subsequently hydrolyzed by HslV. HslU recognizes the N-terminal part of its protein substrates and unfolds these before they are guided to HslV for hydrolysis. This Pseudomonas putida (strain GB-1) protein is ATP-dependent protease ATPase subunit HslU.